A 262-amino-acid chain; its full sequence is MLIIGERINGMFGDIKRAIQERDPAPVQEWARRQEEGGARALDLNVGPAVQDKVSAMEWLVEVTQEVSNLTLCLDSTNIKAIEAGLKKCKNRAMINSTNAEREKVEKLFPLAVEHGAALIGLTMNKTGIPKDSDTRLAFAMELVAAADEFGLPMEDLYIDPLILPANVAQDHAPEVLKTLQQIKMLADPAPKTVLGLSNVSQNCQNRPLINRTFLAMAMACGLDAAIADACDEALIETAATAEILLNQTVYCDSFVKMFKTR.

In terms of domain architecture, Pterin-binding spans Met1–Leu246. Asn96 and Asp160 together coordinate (6S)-5-methyl-5,6,7,8-tetrahydrofolate. Lys184 contacts Ca(2+). Positions 199, 202, and 207 each coordinate (6S)-5-methyl-5,6,7,8-tetrahydrofolate. Methylcob(III)alamin is bound at residue Gln202–Asn203. Ca(2+)-binding residues include Gly222 and Asp224.

This sequence belongs to the vitamin-B12 dependent methionine synthase family. As to quaternary structure, heterohexamer composed of 2 subunits of AcsC, 2 subunits of AcsD and 2 subunits of AcsE. The cofactor is Ca(2+).

It catalyses the reaction methyl-Co(III)-[corrinoid Fe-S protein] + (6S)-5,6,7,8-tetrahydrofolate = Co(I)-[corrinoid Fe-S protein] + (6S)-5-methyl-5,6,7,8-tetrahydrofolate + H(+). Functionally, methyltransferase that mediates the transfer of a N5-methyl group of (6S)-methyltetrahydrofolate to the 5-methoxybenzimidazolylcobamide cofactor of a corrinoid/Fe-S protein (AcsC/AcsD) in the anaerobic acetyl-CoA pathway (Wood-Ljungdahl pathway) of carbon monoxide and carbon dioxide fixation. The chain is 5-methyltetrahydrofolate:corrinoid/iron-sulfur protein co-methyltransferase (acsE) from Moorella thermoacetica (Clostridium thermoaceticum).